The chain runs to 337 residues: Transcription initiation factor IIB (337 aa).

A TFIIB-type zinc finger spans residues 37 to 68 (YTVECPECGSRALVRDYERAELVCSECGLVID). Cys-41, Cys-44, Cys-60, and Cys-63 together coordinate Zn(2+). A run of 2 repeats spans residues 154 to 237 (SELD…SREL) and 248 to 329 (DYIP…ELAE).

Belongs to the TFIIB family.

Stabilizes TBP binding to an archaeal box-A promoter. Also responsible for recruiting RNA polymerase II to the pre-initiation complex (DNA-TBP-TFIIB). This chain is Transcription initiation factor IIB, found in Methanothrix thermoacetophila (strain DSM 6194 / JCM 14653 / NBRC 101360 / PT) (Methanosaeta thermophila).